The sequence spans 350 residues: Protein RecA (350 aa).

67–74 (GPESSGKT) serves as a coordination point for ATP.

This sequence belongs to the RecA family.

It localises to the cytoplasm. Functionally, can catalyze the hydrolysis of ATP in the presence of single-stranded DNA, the ATP-dependent uptake of single-stranded DNA by duplex DNA, and the ATP-dependent hybridization of homologous single-stranded DNAs. It interacts with LexA causing its activation and leading to its autocatalytic cleavage. The polypeptide is Protein RecA (Chlamydia caviae (strain ATCC VR-813 / DSM 19441 / 03DC25 / GPIC) (Chlamydophila caviae)).